A 121-amino-acid polypeptide reads, in one-letter code: Ribonuclease P protein component (121 aa).

Belongs to the RnpA family. As to quaternary structure, consists of a catalytic RNA component (M1 or rnpB) and a protein subunit.

The enzyme catalyses Endonucleolytic cleavage of RNA, removing 5'-extranucleotides from tRNA precursor.. In terms of biological role, RNaseP catalyzes the removal of the 5'-leader sequence from pre-tRNA to produce the mature 5'-terminus. It can also cleave other RNA substrates such as 4.5S RNA. The protein component plays an auxiliary but essential role in vivo by binding to the 5'-leader sequence and broadening the substrate specificity of the ribozyme. This chain is Ribonuclease P protein component, found in Erythrobacter litoralis (strain HTCC2594).